The sequence spans 431 residues: 3-phosphoshikimate 1-carboxyvinyltransferase (431 aa).

Residues K20, S21, and R25 each contribute to the 3-phosphoshikimate site. Position 20 (K20) interacts with phosphoenolpyruvate. Phosphoenolpyruvate is bound by residues G91 and R119. S164, Q166, D317, and K344 together coordinate 3-phosphoshikimate. Q166 provides a ligand contact to phosphoenolpyruvate. Catalysis depends on D317, which acts as the Proton acceptor. 2 residues coordinate phosphoenolpyruvate: R348 and R390.

The protein belongs to the EPSP synthase family. As to quaternary structure, monomer.

The protein localises to the cytoplasm. It catalyses the reaction 3-phosphoshikimate + phosphoenolpyruvate = 5-O-(1-carboxyvinyl)-3-phosphoshikimate + phosphate. The protein operates within metabolic intermediate biosynthesis; chorismate biosynthesis; chorismate from D-erythrose 4-phosphate and phosphoenolpyruvate: step 6/7. Its function is as follows. Catalyzes the transfer of the enolpyruvyl moiety of phosphoenolpyruvate (PEP) to the 5-hydroxyl of shikimate-3-phosphate (S3P) to produce enolpyruvyl shikimate-3-phosphate and inorganic phosphate. This chain is 3-phosphoshikimate 1-carboxyvinyltransferase, found in Aquifex aeolicus (strain VF5).